The sequence spans 256 residues: Ribosomal RNA small subunit methyltransferase A (256 aa).

6 residues coordinate S-adenosyl-L-methionine: Asn12, Leu14, Gly39, Glu60, Asp85, and Asn103.

Belongs to the class I-like SAM-binding methyltransferase superfamily. rRNA adenine N(6)-methyltransferase family. RsmA subfamily.

The protein resides in the cytoplasm. The catalysed reaction is adenosine(1518)/adenosine(1519) in 16S rRNA + 4 S-adenosyl-L-methionine = N(6)-dimethyladenosine(1518)/N(6)-dimethyladenosine(1519) in 16S rRNA + 4 S-adenosyl-L-homocysteine + 4 H(+). In terms of biological role, specifically dimethylates two adjacent adenosines (A1518 and A1519) in the loop of a conserved hairpin near the 3'-end of 16S rRNA in the 30S particle. May play a critical role in biogenesis of 30S subunits. The sequence is that of Ribosomal RNA small subunit methyltransferase A from Legionella pneumophila (strain Corby).